The following is a 191-amino-acid chain: Small ribosomal subunit protein uS5 (191 aa).

The disordered stretch occupies residues 1–20 (MAGERERGGRERSRDREERD). An S5 DRBM domain is found at 23 to 86 (FVDKLVHINR…ESAKRNLTRV (64 aa)).

The protein belongs to the universal ribosomal protein uS5 family. As to quaternary structure, part of the 30S ribosomal subunit. Contacts proteins S4 and S8.

Its function is as follows. With S4 and S12 plays an important role in translational accuracy. Functionally, located at the back of the 30S subunit body where it stabilizes the conformation of the head with respect to the body. The protein is Small ribosomal subunit protein uS5 of Nitrobacter winogradskyi (strain ATCC 25391 / DSM 10237 / CIP 104748 / NCIMB 11846 / Nb-255).